A 448-amino-acid polypeptide reads, in one-letter code: ATP-dependent protease ATPase subunit HslU (448 aa).

ATP contacts are provided by residues isoleucine 23, 65-70 (GIGKTE), aspartate 263, glutamate 327, and arginine 399.

This sequence belongs to the ClpX chaperone family. HslU subfamily. A double ring-shaped homohexamer of HslV is capped on each side by a ring-shaped HslU homohexamer. The assembly of the HslU/HslV complex is dependent on binding of ATP.

The protein localises to the cytoplasm. ATPase subunit of a proteasome-like degradation complex; this subunit has chaperone activity. The binding of ATP and its subsequent hydrolysis by HslU are essential for unfolding of protein substrates subsequently hydrolyzed by HslV. HslU recognizes the N-terminal part of its protein substrates and unfolds these before they are guided to HslV for hydrolysis. In Borreliella burgdorferi (strain ATCC 35210 / DSM 4680 / CIP 102532 / B31) (Borrelia burgdorferi), this protein is ATP-dependent protease ATPase subunit HslU.